The chain runs to 369 residues: UDP-N-acetylglucosamine--N-acetylmuramyl-(pentapeptide) pyrophosphoryl-undecaprenol N-acetylglucosamine transferase (369 aa).

UDP-N-acetyl-alpha-D-glucosamine contacts are provided by residues 15 to 17 (TGG), N126, R169, S197, and Q299.

Belongs to the glycosyltransferase 28 family. MurG subfamily.

Its subcellular location is the cell inner membrane. The enzyme catalyses di-trans,octa-cis-undecaprenyl diphospho-N-acetyl-alpha-D-muramoyl-L-alanyl-D-glutamyl-meso-2,6-diaminopimeloyl-D-alanyl-D-alanine + UDP-N-acetyl-alpha-D-glucosamine = di-trans,octa-cis-undecaprenyl diphospho-[N-acetyl-alpha-D-glucosaminyl-(1-&gt;4)]-N-acetyl-alpha-D-muramoyl-L-alanyl-D-glutamyl-meso-2,6-diaminopimeloyl-D-alanyl-D-alanine + UDP + H(+). It functions in the pathway cell wall biogenesis; peptidoglycan biosynthesis. In terms of biological role, cell wall formation. Catalyzes the transfer of a GlcNAc subunit on undecaprenyl-pyrophosphoryl-MurNAc-pentapeptide (lipid intermediate I) to form undecaprenyl-pyrophosphoryl-MurNAc-(pentapeptide)GlcNAc (lipid intermediate II). The polypeptide is UDP-N-acetylglucosamine--N-acetylmuramyl-(pentapeptide) pyrophosphoryl-undecaprenol N-acetylglucosamine transferase (Methylorubrum extorquens (strain CM4 / NCIMB 13688) (Methylobacterium extorquens)).